A 376-amino-acid chain; its full sequence is Lipoprotein p33 (376 aa).

The signal sequence occupies residues 1–30; that stretch reads MKIKKIKLLKALALTGAFGIVATVPVIVYS. A lipid anchor (N-palmitoyl cysteine) is attached at cysteine 31. Residue cysteine 31 is the site of S-diacylglycerol cysteine attachment. The tract at residues 35–59 is disordered; sequence DNNGGTGDNNTGGGGSGTDQQQGTT. Gly residues predominate over residues 38–51; the sequence is GGTGDNNTGGGGSG.

This sequence belongs to the p35 lipoprotein family.

The protein resides in the cell membrane. The sequence is that of Lipoprotein p33 from Malacoplasma penetrans (Mycoplasma penetrans).